A 586-amino-acid polypeptide reads, in one-letter code: MAASGVEKSSKKKTEKKLAAREEAKLLAGFMGVMNNMRKQKTLCDVILMVQERKIPAHRVVLAAASHFFNLMFTTNMLESKSFEVELKDAEPDIIEQLVEFAYTARISVNSNNVQSLLDAANQYQIEPVKKMCVDFLKEQVDASNCLGISVLAECLDCPELKATADDFIHQHFTEVYKTDEFLQLDVKRVTHLLNQDTLTVRAEDQVYDAAVRWLKYDEPNRQPFMVDILAKVRFPLISKNFLSKTVQAEPLIQDNPECLKMVISGMRYHLLSPEDREELVDGTRPRRKKHDYRIALFGGSQPQSCRYFNPKDYSWTDIRCPFEKRRDAACVFWDNVVYILGGSQLFPIKRMDCYNVVKDSWYSKLGPPTPRDSLAACAAEGKIYTSGGSEVGNSALYLFECYDTRTESWHTKPSMLTQRCSHGMVEANGLIYVCGGSLGNNVSGRVLNSCEVYDPATETWTELCPMIEARKNHGLVFVKDKIFAVGGQNGLGGLDNVEYYDIKLNEWKMVSPMPWKGVTVKCAAVGSIVYVLAGFQGVGRLGHILEYNTETDKWVANSKVRAFPVTSCLICVVDTCGANEETLET.

The BTB domain occupies 44–111 (CDVILMVQER…AYTARISVNS (68 aa)). Positions 146-248 (CLGISVLAEC…SKNFLSKTVQ (103 aa)) constitute a BACK domain. Kelch repeat units lie at residues 294-336 (RIAL…FWDN), 337-382 (VVYI…AAEG), 383-430 (KIYT…EANG), 431-481 (LIYV…FVKD), 483-528 (IFAV…AVGS), and 530-575 (VYVL…CVVD).

As to quaternary structure, homodimer. Component of the BCR(KLHL7) E3 ubiquitin ligase complex, at least composed of CUL3 and KLHL7 and RBX1. In terms of tissue distribution, widely expressed, with highest levels in adult and fetal heart, CNS and adult testis.

Its subcellular location is the nucleus. It is found in the cytoplasm. Its pathway is protein modification; protein ubiquitination. Its function is as follows. Substrate-specific adapter of a BCR (BTB-CUL3-RBX1) E3 ubiquitin ligase complex. The BCR(KLHL7) complex acts by mediating ubiquitination and subsequent degradation of substrate proteins. Probably mediates 'Lys-48'-linked ubiquitination. The chain is Kelch-like protein 7 (KLHL7) from Homo sapiens (Human).